The primary structure comprises 53 residues: Rubredoxin (53 aa).

Residues 1 to 53 (MQKFECTLCGYIYDPALVGPDTPDQDGAFEDVSENWVCPLCGAGKEDFEVYED) enclose the Rubredoxin-like domain. Fe cation-binding residues include C6, C9, C38, and C41.

It belongs to the rubredoxin family. Fe(3+) is required as a cofactor.

In terms of biological role, rubredoxin is a small nonheme, iron protein lacking acid-labile sulfide. Its single Fe, chelated to 4 Cys, functions as an electron acceptor and may also stabilize the conformation of the molecule. The chain is Rubredoxin from Peptoniphilus asaccharolyticus (Peptostreptococcus asaccharolyticus).